Here is a 392-residue protein sequence, read N- to C-terminus: Methylthioribose-1-phosphate isomerase (392 aa).

D268 functions as the Proton donor in the catalytic mechanism.

Belongs to the eIF-2B alpha/beta/delta subunits family. MtnA subfamily.

The protein resides in the cytoplasm. It localises to the nucleus. The catalysed reaction is 5-(methylsulfanyl)-alpha-D-ribose 1-phosphate = 5-(methylsulfanyl)-D-ribulose 1-phosphate. Its pathway is amino-acid biosynthesis; L-methionine biosynthesis via salvage pathway; L-methionine from S-methyl-5-thio-alpha-D-ribose 1-phosphate: step 1/6. Functionally, catalyzes the interconversion of methylthioribose-1-phosphate (MTR-1-P) into methylthioribulose-1-phosphate (MTRu-1-P). The sequence is that of Methylthioribose-1-phosphate isomerase from Ajellomyces capsulatus (strain G186AR / H82 / ATCC MYA-2454 / RMSCC 2432) (Darling's disease fungus).